Consider the following 608-residue polypeptide: MNPVDQPPPPLPTQQPEEQAKEDHDDGDERLFRDPLTTYEYLDDCRDDEEFCHQFLRAYLTPIRNRQEAVRAGLLCRTPEDLAAAGGQKKKTPAPKHPKHAMVYIRRSCLVHSACATAHGKYDIRGLTLESDLAVWAALRGVPLPPDPQHFRWLNAGAFRRLVHEAQYLPEISRAAKRIALAVATGQYVVCTLLDYKTFGTRTHYLRQLCSMTEELYLRLDGTLCLFLEPEERELIGRCLPAALCRGLPVKYRTHRAAVFFHATFMARAEAALKDLYAAFCECGDGRDNGGNHDGNHDGNDHSSLSPSAVASHHSRLEHAELRLERNRHLGAFHLPAIRHLTAGDVARVQDSVSRDLGFADWSQTLIDDYFLLPAGWACANPRRGYAMYLASNAVLALRIIRLLRASIRHEYTACIRMLSGDVQRLIRLFKGEAALLRKGLAQNPVQRRELSRFRKHVHDLKRIRFTEDTFVETFCDFLELVQRIPDYRSVSLRIKRELLCLHVFKLRRGCRAPPTPETARVQRLLWHSLRHGDAPQDRTRLPQFSSALSDAELSNHANRCRRKAPLELGPAVVAAPGPSVRYRAHIQKFERLHVRRFRPHEVGGHAT.

Residues Met1–Thr13 are compositionally biased toward pro residues. A disordered region spans residues Met1–Arg33. Residues Glu18–Arg33 are compositionally biased toward basic and acidic residues.

The protein belongs to the herpesviridae U4 family. In terms of assembly, interacts with host KAT5, PSME3 and EP400.

It localises to the host nucleus. The protein localises to the host nucleolus. Its function is as follows. Promotes a cell cycle arrest in G0/G1 by inducing the proteasomal degradation of host histone acetyltransferase KAT5/Tip60. The polypeptide is Protein UL27 (UL27) (Human cytomegalovirus (strain AD169) (HHV-5)).